Consider the following 115-residue polypeptide: UPF0738 protein SE_0694 (115 aa).

This sequence belongs to the UPF0738 family.

The chain is UPF0738 protein SE_0694 from Staphylococcus epidermidis (strain ATCC 12228 / FDA PCI 1200).